The primary structure comprises 90 residues: Probable oxaloacetate decarboxylase gamma chain 2 (90 aa).

A helical transmembrane segment spans residues 10–32 (GINLLTLGMGFVFIFLIFLVYAT).

The protein belongs to the OadG family. In terms of assembly, heterotrimer of an alpha, a beta and a gamma subunit. Na(+) is required as a cofactor.

The protein localises to the cell membrane. It catalyses the reaction oxaloacetate + 2 Na(+)(in) + H(+) = pyruvate + 2 Na(+)(out) + CO2. Functionally, catalyzes the decarboxylation of oxaloacetate coupled to Na(+) translocation. The chain is Probable oxaloacetate decarboxylase gamma chain 2 (oadG2) from Vibrio cholerae serotype O1 (strain ATCC 39315 / El Tor Inaba N16961).